Reading from the N-terminus, the 247-residue chain is Triosephosphate isomerase (247 aa).

9-11 contributes to the substrate binding site; it reads NWK. The active-site Electrophile is His94. Glu166 acts as the Proton acceptor in catalysis. Substrate contacts are provided by residues Gly172, Ser211, and 232–233; that span reads GG.

It belongs to the triosephosphate isomerase family. In terms of assembly, homodimer.

Its subcellular location is the cytoplasm. The catalysed reaction is D-glyceraldehyde 3-phosphate = dihydroxyacetone phosphate. It functions in the pathway carbohydrate biosynthesis; gluconeogenesis. Its pathway is carbohydrate degradation; glycolysis; D-glyceraldehyde 3-phosphate from glycerone phosphate: step 1/1. Its function is as follows. Involved in the gluconeogenesis. Catalyzes stereospecifically the conversion of dihydroxyacetone phosphate (DHAP) to D-glyceraldehyde-3-phosphate (G3P). This chain is Triosephosphate isomerase, found in Cupriavidus taiwanensis (strain DSM 17343 / BCRC 17206 / CCUG 44338 / CIP 107171 / LMG 19424 / R1) (Ralstonia taiwanensis (strain LMG 19424)).